A 547-amino-acid polypeptide reads, in one-letter code: GMP synthase [glutamine-hydrolyzing] (547 aa).

The 199-residue stretch at 12–210 (KVLILDFGSQ…VLEIAGAKPD (199 aa)) folds into the Glutamine amidotransferase type-1 domain. Cys-89 serves as the catalytic Nucleophile. Catalysis depends on residues His-184 and Glu-186. Residues 211-403 (WIMRDHIEEA…LGLPPEMVYR (193 aa)) form the GMPS ATP-PPase domain. 238–244 (SGGVDSS) lines the ATP pocket.

As to quaternary structure, homodimer.

The catalysed reaction is XMP + L-glutamine + ATP + H2O = GMP + L-glutamate + AMP + diphosphate + 2 H(+). The protein operates within purine metabolism; GMP biosynthesis; GMP from XMP (L-Gln route): step 1/1. Its function is as follows. Catalyzes the synthesis of GMP from XMP. The chain is GMP synthase [glutamine-hydrolyzing] from Ralstonia nicotianae (strain ATCC BAA-1114 / GMI1000) (Ralstonia solanacearum).